Reading from the N-terminus, the 136-residue chain is Large-conductance mechanosensitive channel (136 aa).

Residues 1-16 (MGLLSEFKAFAVKGNV) lie on the Cytoplasmic side of the membrane. The chain crosses the membrane as a helical span at residues 17-45 (VDMAVGIIIGAAFGKIVSSFVGDVIMPPI). At 46–73 (GLLIGGVDFSDLAITLKAEGDVPAVVLA) the chain is on the extracellular side. A helical membrane pass occupies residues 74–93 (YRKFIQTVLNFVIVAFAIFM). At 94–136 (GVKAINRLKREEAVAPSEPPVPSAEETLLTEIRDLLKAQQNKS) the chain is on the cytoplasmic side.

This sequence belongs to the MscL family. In terms of assembly, homopentamer.

It localises to the cell inner membrane. Channel that opens in response to stretch forces in the membrane lipid bilayer. Forms a nonselective ion channel with a conductance of about 4 nanosiemens. May participate in the regulation of osmotic pressure changes within the cell. The sequence is that of Large-conductance mechanosensitive channel from Pseudomonas fluorescens.